The sequence spans 260 residues: Cytochrome c oxidase subunit 2 (260 aa).

At 1 to 41 (MIVREWLFFTMAPCDAAEPWQLGFQDAATPMMQGIIDLHHD) the chain is on the mitochondrial intermembrane side. Residues 42-58 (IFFFLILILVFVSWILV) traverse the membrane as a helical segment. Over 59–82 (RALWHFHYKKNPIPQRIVHGTTIE) the chain is Mitochondrial matrix. The chain crosses the membrane as a helical span at residues 83–104 (IIRTIFPSIILMFIAIPSFALL). The Mitochondrial intermembrane segment spans residues 105-260 (YSMDEVVVDP…NQLIPQTGEA (156 aa)). Cu cation is bound by residues His-187, Cys-222, Glu-224, Cys-226, His-230, and Met-233. Glu-224 contacts Mg(2+).

This sequence belongs to the cytochrome c oxidase subunit 2 family. In terms of assembly, component of the cytochrome c oxidase (complex IV, CIV), a multisubunit enzyme composed of a catalytic core of 3 subunits and several supernumerary subunits. The complex exists as a monomer or a dimer and forms supercomplexes (SCs) in the inner mitochondrial membrane with ubiquinol-cytochrome c oxidoreductase (cytochrome b-c1 complex, complex III, CIII). Cu cation serves as cofactor.

Its subcellular location is the mitochondrion inner membrane. The catalysed reaction is 4 Fe(II)-[cytochrome c] + O2 + 8 H(+)(in) = 4 Fe(III)-[cytochrome c] + 2 H2O + 4 H(+)(out). Its function is as follows. Component of the cytochrome c oxidase, the last enzyme in the mitochondrial electron transport chain which drives oxidative phosphorylation. The respiratory chain contains 3 multisubunit complexes succinate dehydrogenase (complex II, CII), ubiquinol-cytochrome c oxidoreductase (cytochrome b-c1 complex, complex III, CIII) and cytochrome c oxidase (complex IV, CIV), that cooperate to transfer electrons derived from NADH and succinate to molecular oxygen, creating an electrochemical gradient over the inner membrane that drives transmembrane transport and the ATP synthase. Cytochrome c oxidase is the component of the respiratory chain that catalyzes the reduction of oxygen to water. Electrons originating from reduced cytochrome c in the intermembrane space (IMS) are transferred via the dinuclear copper A center (CU(A)) of subunit 2 and heme A of subunit 1 to the active site in subunit 1, a binuclear center (BNC) formed by heme A3 and copper B (CU(B)). The BNC reduces molecular oxygen to 2 water molecules using 4 electrons from cytochrome c in the IMS and 4 protons from the mitochondrial matrix. In Beta vulgaris (Sugar beet), this protein is Cytochrome c oxidase subunit 2 (COX2).